The chain runs to 899 residues: Androgen receptor (899 aa).

Residues 1–537 (MEVQLGLGRV…PIDYYFPPQK (537 aa)) are modulating. Residues 1–566 (MEVQLGLGRV…GSCKVFFKRA (566 aa)) are interaction with ZNF318. Disordered stretches follow at residues 35 to 146 (QNPG…LSLL) and 175 to 222 (QQQQ…LGGN). At serine 61 the chain carries Phosphoserine; by CDK9. Position 75 is a phosphoserine (serine 75). 2 stretches are compositionally biased toward low complexity: residues 94–103 (QPSQQQAASE) and 175–193 (QQQQ…QQQQ). Polar residues predominate over residues 210-222 (APSSSKDSYLGGN). Residue tyrosine 218 is modified to Phosphotyrosine; by CSK. Serine 251 carries the phosphoserine modification. Tyrosine 262 is subject to Phosphotyrosine; by CSK and TNK2. 4 positions are modified to phosphotyrosine; by CSK: tyrosine 302, tyrosine 341, tyrosine 352, and tyrosine 357. Tyrosine 358 carries the post-translational modification Phosphotyrosine; by CSK and TNK2. Lysine 381 participates in a covalent cross-link: Glycyl lysine isopeptide (Lys-Gly) (interchain with G-Cter in SUMO). Position 388 is a phosphotyrosine; by CSK (tyrosine 388). The disordered stretch occupies residues 436–471 (EGQLYGPGGGGGSSSPSDAGPVAPYGYTRPPQGLTS). Lysine 500 participates in a covalent cross-link: Glycyl lysine isopeptide (Lys-Gly) (interchain with G-Cter in SUMO). 2 positions are modified to phosphotyrosine; by CSK: tyrosine 514 and tyrosine 531. Residues 531 to 898 (YYFPPQKTCL…GKVKPIYFHT (368 aa)) are interaction with LPXN. A DNA-binding region (nuclear receptor) is located at residues 538 to 611 (TCLICGDEAS…AGMTLGARKL (74 aa)). 2 consecutive NR C4-type zinc fingers follow at residues 539 to 559 (CLIC…CGSC) and 575 to 599 (CASR…LRKC). Positions 551–641 (YGALTCGSCK…TEDPSQKMTV (91 aa)) are interaction with HIPK3. Residues 571–898 (QKYLCASRND…GKVKPIYFHT (328 aa)) are interaction with CCAR1. The tract at residues 604-898 (MTLGARKLKK…GKVKPIYFHT (295 aa)) is interaction with KAT7. Serine 630 carries the phosphoserine modification. Residues 648–879 (ECQPIFLNVL…DFPEMMAEII (232 aa)) enclose the NR LBD domain. 17beta-hydroxy-5alpha-androstan-3-one is bound by residues asparagine 685 and arginine 732. Residues lysine 825 and lysine 827 each participate in a glycyl lysine isopeptide (Lys-Gly) (interchain with G-Cter in ubiquitin) cross-link. 17beta-hydroxy-5alpha-androstan-3-one is bound at residue threonine 857. Phosphotyrosine; by CSK is present on tyrosine 895.

The protein belongs to the nuclear hormone receptor family. NR3 subfamily. Binds DNA as a homodimer. Part of a ternary complex containing AR, EFCAB6/DJBP and PARK7. Interacts with HIPK3 and NR0B2 in the presence of androgen. The ligand binding domain interacts with KAT7/HBO1 in the presence of dihydrotestosterone. Interacts with EFCAB6/DJBP, PQBP1, RANBP9, SPDEF, SRA1, TGFB1I1, ZNF318 and RREB1. The AR N-terminal poly-Gln region binds Ran resulting in enhancement of AR-mediated transactivation. Ran-binding decreases as the poly-Gln length increases. Interacts with ZMIZ1/ZIMP10 and ZMIZ2/ZMIP7 which both enhance its transactivation activity. Interacts with RBAK. Interacts via the ligand-binding domain with LXXLL and FXXLF motifs from NCOA1, NCOA2, NCOA3 and MAGEA11. Interacts (via nuclear receptor DNA binding domain and nuclear receptor ligand binding domain) with NCOA4. Interacts with HIP1 (via coiled coil domain). Interacts with SLC30A9 and RAD54L2/ARIP4. Interacts with MACROD1 (via macro domain). Interacts (via ligand-binding domain) with TRIM68. Interacts with TNK2. Interacts with USP26. Interacts with RNF6. Interacts (regulated by RNF6 probably through polyubiquitination) with RNF14; regulates AR transcriptional activity. Interacts with PRMT2 and TRIM24. Interacts with RACK1. Interacts with RANBP10; this interaction enhances hormone-induced AR transcriptional activity. Interacts with PRPF6 in a hormone-independent way; this interaction enhances hormone-induced AR transcriptional activity. Interacts with STK4/MST1. Interacts with ZIPK/DAPK3. Interacts with LPXN. Interacts with MAK. Part of a complex containing AR, MAK and NCOA3. Interacts with CRY1. Interacts with CCAR1 and GATA2. Interacts with BUD31. Interacts with ARID4A. Interacts with ARID4B. Interacts (via NR LBD domain) with ZBTB7A; the interaction is direct and androgen-dependent. Interacts with NCOR1. Interacts with NCOR2. Interacts with CRY2 in a ligand-dependent manner. In terms of processing, phosphorylated in prostate cancer cells in response to several growth factors including EGF. Phosphorylation is induced by c-Src kinase (CSK). Tyr-514 is one of the major phosphorylation sites and an increase in phosphorylation and Src kinase activity is associated with prostate cancer progression. Phosphorylation by TNK2 enhances the DNA-binding and transcriptional activity. Phosphorylation at Ser-61 by CDK9 regulates AR promoter selectivity and cell growth. Phosphorylation by PAK6 leads to AR-mediated transcription inhibition. Post-translationally, sumoylated on Lys-381 (major) and Lys-500. Ubiquitinated. Deubiquitinated by USP26. 'Lys-6' and 'Lys-27'-linked polyubiquitination by RNF6 modulates AR transcriptional activity and specificity. Palmitoylated by ZDHHC7 and ZDHHC21. Palmitoylation is required for plasma membrane targeting and for rapid intracellular signaling via ERK and AKT kinases and cAMP generation.

Its subcellular location is the nucleus. The protein resides in the cytoplasm. Functionally, steroid hormone receptors are ligand-activated transcription factors that regulate eukaryotic gene expression and affect cellular proliferation and differentiation in target tissues. Transcription factor activity is modulated by bound coactivator and corepressor proteins like ZBTB7A that recruits NCOR1 and NCOR2 to the androgen response elements/ARE on target genes, negatively regulating androgen receptor signaling and androgen-induced cell proliferation. Transcription activation is also down-regulated by NR0B2. Activated, but not phosphorylated, by HIPK3 and ZIPK/DAPK3. The chain is Androgen receptor (Ar) from Mus musculus (Mouse).